Reading from the N-terminus, the 688-residue chain is PTS system glucoside-specific EIICBA component (688 aa).

One can recognise a PTS EIIC type-1 domain in the interval 3 to 427; sequence KKLFGQLQRI…FKLKTPGRED (425 aa). 10 helical membrane passes run 12-32, 81-101, 137-157, 182-202, 223-243, 284-304, 315-335, 340-360, 364-384, and 395-415; these read IGKALMLPVAILPAAGILLAF, LGLAGGDGVAALAALVGYLIM, LVLGIPTLQTGVFGGIIMGAL, FVPIVTSVVAIATGVVLSFAW, LTTFIFGIIERSLIPFGLHHI, AFTTGKYPFMMFGLPAAAFAI, IVGGLMLSAGLTAFLTGITEP, FLFVAPVLYGIHVLLAGTSFL, LLGVKIGMTFSGGFIDYILYG, and LVIPVGIVYAIVYYFLFDFAI. The PTS EIIB type-1 domain maps to 438–519; the sequence is AKLPFDVLDA…AKIMSGEITK (82 aa). The Phosphocysteine intermediate; for EIIB activity role is filled by C460. Residues 560-664 enclose the PTS EIIA type-1 domain; it reads DQVFAGKMMG…SIVTPMIITN (105 aa). H612 acts as the Tele-phosphohistidine intermediate; for EIIA activity in catalysis.

The protein localises to the cell membrane. In terms of biological role, the phosphoenolpyruvate-dependent sugar phosphotransferase system (sugar PTS), a major carbohydrate active -transport system, catalyzes the phosphorylation of incoming sugar substrates concomitantly with their translocation across the cell membrane. This system is involved in alpha- and beta-glucoside transport. This chain is PTS system glucoside-specific EIICBA component (glcB), found in Staphylococcus aureus (strain MRSA252).